Consider the following 52-residue polypeptide: Insulin (52 aa).

3 cysteine pairs are disulfide-bonded: C7/C38, C19/C51, and C37/C42.

It belongs to the insulin family. Heterodimer of a B chain and an A chain linked by two disulfide bonds.

The protein localises to the secreted. Insulin decreases blood glucose concentration. It increases cell permeability to monosaccharides, amino acids and fatty acids. It accelerates glycolysis, the pentose phosphate cycle, and glycogen synthesis in liver. This chain is Insulin (ins), found in Acipenser gueldenstaedtii (Russian sturgeon).